A 465-amino-acid polypeptide reads, in one-letter code: UDP-N-acetylmuramate--L-alanine ligase (465 aa).

Residue 114 to 120 participates in ATP binding; that stretch reads GAHGKTT.

This sequence belongs to the MurCDEF family.

The protein localises to the cytoplasm. The enzyme catalyses UDP-N-acetyl-alpha-D-muramate + L-alanine + ATP = UDP-N-acetyl-alpha-D-muramoyl-L-alanine + ADP + phosphate + H(+). The protein operates within cell wall biogenesis; peptidoglycan biosynthesis. Functionally, cell wall formation. This is UDP-N-acetylmuramate--L-alanine ligase from Syntrophomonas wolfei subsp. wolfei (strain DSM 2245B / Goettingen).